We begin with the raw amino-acid sequence, 363 residues long: MEDLEEDVRFIVDETLDFGGLSPSDSREEEDITVLVTPEKPLRRGLSHRSDPNAVAPAPQGVRLSLGPLSPEKLEEILDEANRLAAQLEQCALQDRESAGEGLGPRRVKPSPRRETFVLKDSPVRDLLPTVNSLTRSTPSPSSLTPRLRSNDRKGSVRALRATSGKRPSNMKRESPTCNLFPASKSPASSPLTRSTPPVRGRAGPSGRAAASEETRAAKLRVSGSGEFVGLTLKFLHPSPPGPPTPIRSVLAPQPSTSNSQRLPRPQGAAAKSSSQLPIPSAIPRPASRMPLTSRSVPPGRGALPPDSLSTRKGLPRPSTAGHRVRESGHKVPVSQRLNLPVMGATRSNLQPPRKVAVPGPTR.

A Phosphoserine modification is found at serine 22. Residues 38-41 (PEKP) form repeat 1. The tract at residues 39-67 (EKPLRRGLSHRSDPNAVAPAPQGVRLSLG) is disordered. Leucine 42 bears the Phosphoserine mark. Phosphothreonine is present on glycine 45. Phosphoserine occurs at positions 47, 65, 70, 98, 122, and 140. Copy 2 of the repeat occupies 68–71 (PLSP). Positions 70–94 (SPEKLEEILDEANRLAAQLEQCALQ) form a coiled coil. The interval 95–363 (DRESAGEGLG…RKVAVPGPTR (269 aa)) is disordered. Residues 103-246 (LGPRRVKPSP…HPSPPGPPTP (144 aa)) form a 4 X 4 AA repeats of P-X-X-P region. Positions 112-124 (PRRETFVLKDSPV) are enriched in basic and acidic residues. A compositionally biased stretch (low complexity) spans 133–148 (SLTRSTPSPSSLTPRL). Phosphothreonine is present on threonine 145. Phosphoserine is present on residues serine 186 and serine 190. Polar residues predominate over residues 186–196 (SPASSPLTRST). The segment covering 197–210 (PPVRGRAGPSGRAA) has biased composition (low complexity). The residue at position 212 (serine 212) is a Phosphoserine. Position 215 is a phosphothreonine (threonine 215). 2 consecutive repeat copies span residues 238–241 (PSPP) and 243–246 (PPTP).

This sequence belongs to the PSRC1 family. In terms of assembly, interacts with APC2. Interacts with KIF2A. Interacts with ANKRD53; recruits ANKRD53 to the spindle during mitosis. Post-translationally, phosphorylated during mitosis. In terms of tissue distribution, widely expressed in adult and fetal tissues, with highest expression in the adult brain and fetal thymus. Not detected in adult skeletal muscle.

Its subcellular location is the cytoplasm. It is found in the cytoskeleton. It localises to the spindle. The protein resides in the spindle pole. Required for normal progression through mitosis. Required for normal congress of chromosomes at the metaphase plate, and for normal rate of chromosomal segregation during anaphase. Plays a role in the regulation of mitotic spindle dynamics. Increases the rate of turnover of microtubules on metaphase spindles, and contributes to the generation of normal tension across sister kinetochores. Recruits KIF2A and ANKRD53 to the mitotic spindle and spindle poles. May participate in p53/TP53-regulated growth suppression. This chain is Proline/serine-rich coiled-coil protein 1 (PSRC1), found in Homo sapiens (Human).